The primary structure comprises 374 residues: Histidinol-phosphate aminotransferase 2 (374 aa).

The residue at position 227 (K227) is an N6-(pyridoxal phosphate)lysine.

It belongs to the class-II pyridoxal-phosphate-dependent aminotransferase family. Histidinol-phosphate aminotransferase subfamily. As to quaternary structure, homodimer. The cofactor is pyridoxal 5'-phosphate.

It carries out the reaction L-histidinol phosphate + 2-oxoglutarate = 3-(imidazol-4-yl)-2-oxopropyl phosphate + L-glutamate. The protein operates within amino-acid biosynthesis; L-histidine biosynthesis; L-histidine from 5-phospho-alpha-D-ribose 1-diphosphate: step 7/9. The protein is Histidinol-phosphate aminotransferase 2 (hisC2) of Ralstonia nicotianae (strain ATCC BAA-1114 / GMI1000) (Ralstonia solanacearum).